Consider the following 219-residue polypeptide: Putative mediator of RNA polymerase II transcription subunit 10 (219 aa).

Low complexity predominate over residues Met-1–Ser-39. Disordered stretches follow at residues Met-1–Glu-42 and Lys-177–Asn-219. Coiled-coil stretches lie at residues Gln-13–Glu-74 and Glu-166–Asn-219. Residues Lys-177 to Asp-192 show a composition bias toward basic and acidic residues. Low complexity predominate over residues Asn-194–Asn-219.

Belongs to the Mediator complex subunit 10 family. Component of the Mediator complex.

The protein resides in the nucleus. Component of the Mediator complex, a coactivator involved in the regulated transcription of nearly all RNA polymerase II-dependent genes. Mediator functions as a bridge to convey information from gene-specific regulatory proteins to the basal RNA polymerase II transcription machinery. Mediator is recruited to promoters by direct interactions with regulatory proteins and serves as a scaffold for the assembly of a functional preinitiation complex with RNA polymerase II and the general transcription factors. The sequence is that of Putative mediator of RNA polymerase II transcription subunit 10 (med10) from Dictyostelium discoideum (Social amoeba).